The chain runs to 194 residues: uncharacterized protein (194 aa).

Disordered stretches follow at residues 1 to 72 (MAAK…PAAE) and 113 to 194 (VLIP…SLAV). Over residues 26–39 (AEGRSSEGRKERTA) the composition is skewed to basic and acidic residues. Polar residues predominate over residues 146-171 (GSSSTSRNQVASLAYRTQNTAASQPR).

This is an uncharacterized protein from Homo sapiens (Human).